A 149-amino-acid chain; its full sequence is Transcriptional repressor NrdR (149 aa).

A zinc finger spans residues 3–34; that stretch reads CPFCGANDTKVIDSRLVADGHQVRRRRQCLAC. Residues 49–139 form the ATP-cone domain; it reads PRVIKTDGNR…VYRSFEDIRE (91 aa).

It belongs to the NrdR family. Zn(2+) serves as cofactor.

In terms of biological role, negatively regulates transcription of bacterial ribonucleotide reductase nrd genes and operons by binding to NrdR-boxes. This Photobacterium profundum (strain SS9) protein is Transcriptional repressor NrdR.